Here is a 469-residue protein sequence, read N- to C-terminus: uncharacterized protein (469 aa).

The disordered stretch occupies residues Ala-203–Gly-244.

Belongs to the epstein-barr virus LF1 family.

This is an uncharacterized protein from Homo sapiens (Human).